The primary structure comprises 75 residues: Rugosin-LK1 (75 aa).

Positions 1-22 (MFTMKKSLLFLFFLGTISLSFC) are cleaved as a signal peptide. A propeptide spanning residues 23 to 40 (EEERSADEDDEGEMTEEE) is cleaved from the precursor.

Expressed by the skin glands.

The protein resides in the secreted. Functionally, has antimicrobial activity against Gram-positive bacteria S.aureus ATCC 2592 (MIC=10.0 uM), S.aureus ATCC 43300 (MIC=15.0 uM) and B.subtilis (MIC=40.0 uM), against Gram-negative bacteria E.coli ML-35P (MIC=10.0 uM), P.aeruginosa PA01 (MIC=5.0 uM) and P.aeruginosa ATCC 27853 (MIC=5.0 uM) and against fungus C.albicans ATCC 2002 (MIC=10.0 uM). This chain is Rugosin-LK1, found in Limnonectes kuhlii (Kuhl's Creek frog).